A 404-amino-acid chain; its full sequence is MAAIKKVVLAYSGGLDTSVILKWLGDNYHCEVVTFTADIGQGEEVEPAREKALKLGIKSENIFIEDLREEFIKDFVFPMFRANTIYEGEYLLGTSIARPLIAKRLVEIAKSVGADAIAHGATGKGNDQVRFELGAYALNPDIKVIAPWREWDLNSREKLLAYAESAGIAIEKKQNKSPYSMDANLLHISYEGQILEDPNVEPEEDMWRWSVSPLNAPDKPESISIEFQNGDGVAINGEKLSPANFWVNLNELGGKHGIGRLDLVENRYVGMKSRGCYETPGGTIYLKAHRAIESLCLDREEAHLKDSIMPKYAELIYNGYWFSPEREALQALIDKTQQKVSGVVRLKLYKGNVIVIGRESKNSLFNAAYSTFEEDSVYNQKDAAGFIKLNALRFIIAGKANRDK.

ATP is bound by residues 10–18 and Ala-37; that span reads AYSGGLDTS. L-citrulline is bound by residues Tyr-90 and Ser-95. Gly-120 lines the ATP pocket. Positions 122, 126, and 127 each coordinate L-aspartate. Residue Asn-126 participates in L-citrulline binding. Positions 130, 180, 189, 265, and 277 each coordinate L-citrulline.

The protein belongs to the argininosuccinate synthase family. Type 1 subfamily. Homotetramer.

The protein localises to the cytoplasm. The catalysed reaction is L-citrulline + L-aspartate + ATP = 2-(N(omega)-L-arginino)succinate + AMP + diphosphate + H(+). It functions in the pathway amino-acid biosynthesis; L-arginine biosynthesis; L-arginine from L-ornithine and carbamoyl phosphate: step 2/3. This Helicobacter hepaticus (strain ATCC 51449 / 3B1) protein is Argininosuccinate synthase.